The primary structure comprises 853 residues: MSEDGSNVEPGGFPRFESLEEPGSEISDLLDEASPYSKSKDSNQIYEANPSKDTEQSAASFTSQLDRNEEKNTGIPFSETNIADIIPLSIEESLQSSGSSETKMAEDYYPVKFPTGRKFRGRIFNGNQKGLDMKSDNFTVNLDAKGLQEFPVDIVKVKYVKYLYLDKNQIKNFQGIDPGDLLGLEILSLQENGLSSIPLEIQLFHNLKILNASYNEISQIPKELLQLENMRQLLLNSNHIDTLPSGLEHLRYLETLSLGKNMLTYIPDSLSSLKNLRILNLEYNQLTIFSKSLCFLPKLNSLNLTGNMIGSLPKEVRELKNLESLLMDHNKLTFLAVEIFQLPKIKELHLADNKLEAISPKIENFKELRLLNLDKNLLQSIPKKISHCVNLESLSLSDNNIEELPKKIRKLKNLRQLHVNRNKMITMTEEISHLSNIHILEFSGNQITHVPIEIKNCRKITRVELNYNNIMYFPVGLCALQSLDYLSFNGNYISEIPVDMSFSKQLLHLELNRNKLTVFSKHLCSLTNLEYLDLAKNQIMTIPSCISAMVSLHVLILSDNKFESFPKELCSLKNLRVLDISENKLQKIPLEISKLKRIQKLNLSNNIFTNFPVELCQLQTLEELNISQTSGKKLTRLPEEVSHMTQLKILNISNNAIKDIPKNIGELRSLVSFYASNNQISSLPSSFLSLEVLQSLDLRGNNMTALPSGIYKLSSLKEINFDDNPLMRPPMEICKGKEMHMITCYLQRADERDEKILEKIFNIVANSITETNFEFLQQKLNMASSANNMPVRPTTPLNERIYQALIKWKAEKDVQFTATALRDKLFRALNMIGAYDIMDKITALNLYTSAIKL.

The tract at residues 1-78 is disordered; the sequence is MSEDGSNVEP…EEKNTGIPFS (78 aa). Residues 19 to 31 show a composition bias toward acidic residues; the sequence is LEEPGSEISDLLD. The span at 56–65 shows a compositional bias: polar residues; that stretch reads QSAASFTSQL. LRR repeat units lie at residues 133-157, 159-180, 183-204, 206-227, 229-251, 252-274, 275-297, 298-319, 321-342, 344-365, 367-388, 390-411, 413-435, 436-457, 459-481, 482-503, 505-527, 528-549, 551-573, 574-596, 597-618, 620-641, 646-668, 669-690, 692-713, and 715-736; these read MKSD…IVKV, YVKY…DPGD, GLEI…IQLF, NLKI…LLQL, NMRQ…EHLR, YLET…SSLK, NLRI…CFLP, KLNS…VREL, NLES…IFQL, KIKE…IENF, ELRL…ISHC, NLES…IRKL, NLRQ…SHLS, NIHI…IKNC, KITR…CALQ, SLDY…MSFS, QLLH…CSLT, NLEY…ISAM, SLHV…CSLK, NLRV…SKLK, RIQK…LCQL, TLEE…PEEV, QLKI…GELR, SLVS…FLSL, VLQS…IYKL, and SLKE…ICKG. The region spanning 757–845 is the Death domain; that stretch reads LEKIFNIVAN…DIMDKITALN (89 aa).

The polypeptide is Leucine-rich repeat and death domain-containing protein 1 (Lrrd1) (Mus musculus (Mouse)).